Reading from the N-terminus, the 443-residue chain is ATP-dependent protease ATPase subunit HslU (443 aa).

ATP-binding positions include Ile18, 60–65, Asp256, Glu321, and Arg393; that span reads GVGKTE.

This sequence belongs to the ClpX chaperone family. HslU subfamily. In terms of assembly, a double ring-shaped homohexamer of HslV is capped on each side by a ring-shaped HslU homohexamer. The assembly of the HslU/HslV complex is dependent on binding of ATP.

The protein resides in the cytoplasm. In terms of biological role, ATPase subunit of a proteasome-like degradation complex; this subunit has chaperone activity. The binding of ATP and its subsequent hydrolysis by HslU are essential for unfolding of protein substrates subsequently hydrolyzed by HslV. HslU recognizes the N-terminal part of its protein substrates and unfolds these before they are guided to HslV for hydrolysis. The chain is ATP-dependent protease ATPase subunit HslU from Buchnera aphidicola subsp. Acyrthosiphon pisum (strain 5A).